The chain runs to 290 residues: Acetyl-coenzyme A carboxylase carboxyl transferase subunit beta (290 aa).

The 262-residue stretch at 29–290 (LWGKCPECSQ…RLHGYREKRK (262 aa)) folds into the CoA carboxyltransferase N-terminal domain. Zn(2+)-binding residues include cysteine 33, cysteine 36, cysteine 52, and cysteine 55. The segment at 33 to 55 (CPECSQVVYRKDLLENANVCSNC) adopts a C4-type zinc-finger fold.

Belongs to the AccD/PCCB family. In terms of assembly, acetyl-CoA carboxylase is a heterohexamer composed of biotin carboxyl carrier protein (AccB), biotin carboxylase (AccC) and two subunits each of ACCase subunit alpha (AccA) and ACCase subunit beta (AccD). The cofactor is Zn(2+).

Its subcellular location is the cytoplasm. The catalysed reaction is N(6)-carboxybiotinyl-L-lysyl-[protein] + acetyl-CoA = N(6)-biotinyl-L-lysyl-[protein] + malonyl-CoA. Its pathway is lipid metabolism; malonyl-CoA biosynthesis; malonyl-CoA from acetyl-CoA: step 1/1. Its function is as follows. Component of the acetyl coenzyme A carboxylase (ACC) complex. Biotin carboxylase (BC) catalyzes the carboxylation of biotin on its carrier protein (BCCP) and then the CO(2) group is transferred by the transcarboxylase to acetyl-CoA to form malonyl-CoA. The sequence is that of Acetyl-coenzyme A carboxylase carboxyl transferase subunit beta from Prochlorococcus marinus (strain MIT 9211).